A 148-amino-acid chain; its full sequence is FAD synthase (148 aa).

ATP contacts are provided by residues 14–15 (VF), 19–22 (HAGH), and Asp100.

Belongs to the archaeal FAD synthase family. As to quaternary structure, homodimer. It depends on a divalent metal cation as a cofactor.

It catalyses the reaction FMN + ATP + H(+) = FAD + diphosphate. Its pathway is cofactor biosynthesis; FAD biosynthesis; FAD from FMN: step 1/1. In terms of biological role, catalyzes the transfer of the AMP portion of ATP to flavin mononucleotide (FMN) to produce flavin adenine dinucleotide (FAD) coenzyme. This Pyrococcus horikoshii (strain ATCC 700860 / DSM 12428 / JCM 9974 / NBRC 100139 / OT-3) protein is FAD synthase.